Reading from the N-terminus, the 401-residue chain is MKKLWQNCHIATMQNGQYSYIEDAAIVTEGHLIHWIGKQQQLPADTYSETVDLNGAWVTPGFIDCHTHSVFGGNRSVEFEKRLQGVSYAEIAASGGGIASTVRATREASEEQLLNSALKRIRCMQQDGVTTIEIKSGYGLNYENERKMLRVIRQIGEKLPMTVKSTCLAAHALPPEYKDQSDAYIEHICTEMLPKLHAEGLVDAVDAFCEHLAFSPAQVERVFKTAQSLGLPVKLHAEQLSSLGGSSLAARYHALSADHLEYMTEDDVKAMAESGTVAVLLPGAFYLLRETQYPPIESLIKHGVRIALSSDLNPGTSPALSLRLILNMGSTLFRLTPEQALAGITIHAAQALGLEQTHGSLEQGKVADFVAWDIEHPSEIVYWLGGDLPKRVVQHGQEVIF.

Residues H66 and H68 each contribute to the Fe(3+) site. Residues H66 and H68 each coordinate Zn(2+). Residues R75, Y138, and H171 each coordinate 4-imidazolone-5-propanoate. Y138 lines the N-formimidoyl-L-glutamate pocket. H236 provides a ligand contact to Fe(3+). H236 is a binding site for Zn(2+). Q239 lines the 4-imidazolone-5-propanoate pocket. A Fe(3+)-binding site is contributed by D311. D311 serves as a coordination point for Zn(2+). N313 and G315 together coordinate N-formimidoyl-L-glutamate. Position 316 (T316) interacts with 4-imidazolone-5-propanoate.

It belongs to the metallo-dependent hydrolases superfamily. HutI family. Zn(2+) is required as a cofactor. The cofactor is Fe(3+).

The protein resides in the cytoplasm. The enzyme catalyses 4-imidazolone-5-propanoate + H2O = N-formimidoyl-L-glutamate. Its pathway is amino-acid degradation; L-histidine degradation into L-glutamate; N-formimidoyl-L-glutamate from L-histidine: step 3/3. Catalyzes the hydrolytic cleavage of the carbon-nitrogen bond in imidazolone-5-propanoate to yield N-formimidoyl-L-glutamate. It is the third step in the universal histidine degradation pathway. This chain is Imidazolonepropionase, found in Acinetobacter baumannii (strain AB0057).